A 257-amino-acid polypeptide reads, in one-letter code: UPF0246 protein Shal_1126 (257 aa).

Belongs to the UPF0246 family.

This is UPF0246 protein Shal_1126 from Shewanella halifaxensis (strain HAW-EB4).